A 121-amino-acid chain; its full sequence is Large ribosomal subunit protein uL18 (121 aa).

It belongs to the universal ribosomal protein uL18 family. As to quaternary structure, part of the 50S ribosomal subunit; part of the 5S rRNA/L5/L18/L25 subcomplex. Contacts the 5S and 23S rRNAs.

Its function is as follows. This is one of the proteins that bind and probably mediate the attachment of the 5S RNA into the large ribosomal subunit, where it forms part of the central protuberance. The protein is Large ribosomal subunit protein uL18 of Bdellovibrio bacteriovorus (strain ATCC 15356 / DSM 50701 / NCIMB 9529 / HD100).